The chain runs to 363 residues: Sulfate/thiosulfate import ATP-binding protein CysA (363 aa).

The region spanning 3–237 (IEINNISKYF…PATRFVLEFL (235 aa)) is the ABC transporter domain. Residue 35–42 (GPSGSGKT) participates in ATP binding.

The protein belongs to the ABC transporter superfamily. Sulfate/tungstate importer (TC 3.A.1.6) family. In terms of assembly, the complex is composed of two ATP-binding proteins (CysA), two transmembrane proteins (CysT and CysW) and a solute-binding protein (CysP).

It localises to the cell inner membrane. It catalyses the reaction sulfate(out) + ATP + H2O = sulfate(in) + ADP + phosphate + H(+). The catalysed reaction is thiosulfate(out) + ATP + H2O = thiosulfate(in) + ADP + phosphate + H(+). In terms of biological role, part of the ABC transporter complex CysAWTP involved in sulfate/thiosulfate import. Responsible for energy coupling to the transport system. In Yersinia pestis, this protein is Sulfate/thiosulfate import ATP-binding protein CysA.